Consider the following 114-residue polypeptide: T cell receptor beta variable 9 (114 aa).

The signal sequence occupies residues Met-1–Ser-21. Residues Gly-22 to Val-114 enclose the Ig-like domain. Cysteines 42 and 110 form a disulfide. N-linked (GlcNAc...) asparagine glycosylation occurs at Asn-96.

As to quaternary structure, alpha-beta TR is a heterodimer composed of an alpha and beta chain; disulfide-linked. The alpha-beta TR is associated with the transmembrane signaling CD3 coreceptor proteins to form the TR-CD3 (TcR or TCR). The assembly of alpha-beta TR heterodimers with CD3 occurs in the endoplasmic reticulum where a single alpha-beta TR heterodimer associates with one CD3D-CD3E heterodimer, one CD3G-CD3E heterodimer and one CD247 homodimer forming a stable octameric structure. CD3D-CD3E and CD3G-CD3E heterodimers preferentially associate with TR alpha and TR beta chains, respectively. The association of the CD247 homodimer is the last step of TcR assembly in the endoplasmic reticulum and is required for transport to the cell surface.

The protein localises to the cell membrane. In terms of biological role, v region of the variable domain of T cell receptor (TR) beta chain that participates in the antigen recognition. Alpha-beta T cell receptors are antigen specific receptors which are essential to the immune response and are present on the cell surface of T lymphocytes. Recognize peptide-major histocompatibility (MH) (pMH) complexes that are displayed by antigen presenting cells (APC), a prerequisite for efficient T cell adaptive immunity against pathogens. Binding of alpha-beta TR to pMH complex initiates TR-CD3 clustering on the cell surface and intracellular activation of LCK that phosphorylates the ITAM motifs of CD3G, CD3D, CD3E and CD247 enabling the recruitment of ZAP70. In turn ZAP70 phosphorylates LAT, which recruits numerous signaling molecules to form the LAT signalosome. The LAT signalosome propagates signal branching to three major signaling pathways, the calcium, the mitogen-activated protein kinase (MAPK) kinase and the nuclear factor NF-kappa-B (NF-kB) pathways, leading to the mobilization of transcription factors that are critical for gene expression and essential for T cell growth and differentiation. The T cell repertoire is generated in the thymus, by V-(D)-J rearrangement. This repertoire is then shaped by intrathymic selection events to generate a peripheral T cell pool of self-MH restricted, non-autoaggressive T cells. Post-thymic interaction of alpha-beta TR with the pMH complexes shapes TR structural and functional avidity. In Homo sapiens (Human), this protein is T cell receptor beta variable 9.